The sequence spans 109 residues: Thiosulfate sulfurtransferase GlpE (109 aa).

One can recognise a Rhodanese domain in the interval 17–105 (AQGQALLLDI…WQRAYPEEVA (89 aa)). The active-site Cysteine persulfide intermediate is cysteine 65.

The protein belongs to the GlpE family.

It is found in the cytoplasm. It catalyses the reaction thiosulfate + hydrogen cyanide = thiocyanate + sulfite + 2 H(+). The catalysed reaction is thiosulfate + [thioredoxin]-dithiol = [thioredoxin]-disulfide + hydrogen sulfide + sulfite + 2 H(+). Its function is as follows. Transferase that catalyzes the transfer of sulfur from thiosulfate to thiophilic acceptors such as cyanide or dithiols. May function in a CysM-independent thiosulfate assimilation pathway by catalyzing the conversion of thiosulfate to sulfite, which can then be used for L-cysteine biosynthesis. This Edwardsiella ictaluri (strain 93-146) protein is Thiosulfate sulfurtransferase GlpE.